A 353-amino-acid chain; its full sequence is MATDGLHENETLASLKIEAESLKGKLEEERAKLHDVELHQVAERVEALGQFVMKTRRTLKGHGNKVLCMDWCKDKRRIVSSSQDGKVIVWDSFTTNKEHAVTMPCTWVMACAYAPSGCAIACGGLDNKCSVYPLTFDKNENMAAKKKSVAMHTNYLSACSFTNSDMQILTASGDGTCALWDVESGQLLQSFHGHGADVLCLDLAPSETGNTFVSGGCDKKAMVWDMRSGQCVQAFETHESDINSVRYYPSGDAFASGSDDATCRLYDLRADREVAIYSKESIIFGASSVDFSLSGRLLFAGYNDYTINVWDVLKGARVSILFGHENRVSTLRVSPDGTAFCSGSWDHTLRVWA.

7 WD repeats span residues 61-100 (GHGN…KEHA), 103-142 (MPCT…NENM), 151-192 (MHTN…QSFH), 194-236 (HGAD…QAFE), 237-276 (THES…EVAI), 278-320 (SKES…RVSI), and 323-352 (GHEN…LRVW).

The protein belongs to the WD repeat G protein beta family. In terms of assembly, component of a complex composed of RGS9 (isoform RGS9-1), GNB5 and RGS9BP; within this complex, the presence of GNB5 stabilizes both itself and RGS9 and increases RGS9 GTPase-activating protein (GAP) activity. Interacts with RGS7, forming the RGS7-GNB5 complex; within this complex, the presence of GNB5 increases RGS7 GTPase-activating protein (GAP) activity. Interacts with GPR158; promotes the GTPase activator activity of the RGS7-GNB5 complex in absence of glycine, in contrast GTPase activator activity of the RGS7-GNB5 complex is inhibited in presence of glycine. Interacts with RGS6.

It is found in the membrane. Enhances GTPase-activating protein (GAP) activity of regulator of G protein signaling (RGS) proteins, such as RGS7 and RGS9, hence involved in the termination of the signaling initiated by the G protein coupled receptors (GPCRs) by accelerating the GTP hydrolysis on the G-alpha subunits, thereby promoting their inactivation. Increases RGS7 GTPase-activating protein (GAP) activity, thereby regulating mood and cognition. Increases RGS9 GTPase-activating protein (GAP) activity, hence contributes to the deactivation of G protein signaling initiated by D(2) dopamine receptors. May play an important role in neuronal signaling, including in the parasympathetic, but not sympathetic, control of heart rate. The protein is Guanine nucleotide-binding protein subunit beta-5 (GNB5) of Oryctolagus cuniculus (Rabbit).